The sequence spans 246 residues: Thiamine import ATP-binding protein ThiQ (246 aa).

Residues 10-239 (VKLDALAFAY…QGPPAFARYL (230 aa)) enclose the ABC transporter domain. 41 to 48 (GPSGSGKS) contributes to the ATP binding site.

It belongs to the ABC transporter superfamily. Thiamine importer (TC 3.A.1.19.1) family. The complex is composed of two ATP-binding proteins (ThiQ), two transmembrane proteins (ThiP) and a solute-binding protein (ThiB).

It is found in the cell inner membrane. The enzyme catalyses thiamine(out) + ATP + H2O = thiamine(in) + ADP + phosphate + H(+). In terms of biological role, part of the ABC transporter complex ThiBPQ involved in thiamine import. Responsible for energy coupling to the transport system. This chain is Thiamine import ATP-binding protein ThiQ, found in Chelativorans sp. (strain BNC1).